We begin with the raw amino-acid sequence, 206 residues long: Large ribosomal subunit protein uL4 (206 aa).

Over residues 42-54 the composition is skewed to polar residues; sequence RRQQGTHQSQGRS. The tract at residues 42 to 93 is disordered; it reads RRQQGTHQSQGRSDVSRTGAKMFKQKGTGRARHSSARAPQFRGGGKAHGPVV. The segment covering 64–76 has biased composition (basic residues); sequence FKQKGTGRARHSS.

This sequence belongs to the universal ribosomal protein uL4 family. As to quaternary structure, part of the 50S ribosomal subunit.

Its function is as follows. One of the primary rRNA binding proteins, this protein initially binds near the 5'-end of the 23S rRNA. It is important during the early stages of 50S assembly. It makes multiple contacts with different domains of the 23S rRNA in the assembled 50S subunit and ribosome. Forms part of the polypeptide exit tunnel. The protein is Large ribosomal subunit protein uL4 of Bartonella henselae (strain ATCC 49882 / DSM 28221 / CCUG 30454 / Houston 1) (Rochalimaea henselae).